Here is a 201-residue protein sequence, read N- to C-terminus: Small ribosomal subunit protein uS4c (201 aa).

The tract at residues 13-43 (RRLGDLPGLSRKAIKRPYPPGEHGQKPRKPS) is disordered. The region spanning 90–154 (MRLDNTIFRL…SKQLVESYLA (65 aa)) is the S4 RNA-binding domain.

The protein belongs to the universal ribosomal protein uS4 family. Part of the 30S ribosomal subunit. Contacts protein S5. The interaction surface between S4 and S5 is involved in control of translational fidelity.

Its subcellular location is the plastid. It is found in the chloroplast. In terms of biological role, one of the primary rRNA binding proteins, it binds directly to 16S rRNA where it nucleates assembly of the body of the 30S subunit. Functionally, with S5 and S12 plays an important role in translational accuracy. This chain is Small ribosomal subunit protein uS4c (rps4), found in Porphyra purpurea (Red seaweed).